Reading from the N-terminus, the 700-residue chain is Receptor-type tyrosine-protein phosphatase epsilon (700 aa).

Positions 1 to 19 (MEPLCPLLLVGFSLPLARA) are cleaved as a signal peptide. The Extracellular portion of the chain corresponds to 20-46 (LRGNETTADSNETTTTSGPPDPGASQP). N-linked (GlcNAc...) asparagine glycans are attached at residues asparagine 23 and asparagine 30. Residues 47–69 (LLAWLLLPLLLLLLVLLLAAYFF) form a helical membrane-spanning segment. The Cytoplasmic segment spans residues 70–700 (RFRKQRKAVV…DIFSDYANFK (631 aa)). Tyrosine-protein phosphatase domains lie at 135–394 (FREE…LLEY) and 426–689 (LEEE…VQDF). Residues aspartate 303, 335-341 (CSAGVGR), and glutamine 379 contribute to the substrate site. Catalysis depends on cysteine 335, which acts as the Phosphocysteine intermediate. Cysteine 630 serves as the catalytic Phosphocysteine intermediate. The residue at position 696 (tyrosine 696) is a Phosphotyrosine.

Belongs to the protein-tyrosine phosphatase family. Receptor class 4 subfamily. Monomer. Isoform 2: Homodimer. Can form oligomers. Dimerization is increased by oxidative stress and decreased by EGFR. Isoform 2 interacts with GRB2. Post-translationally, a catalytically active cytoplasmic form (p65) is produced by proteolytic cleavage of either isoform 1, isoform 2 or isoform 3. Isoform 1 and isoform 2 are phosphorylated on tyrosine residues by tyrosine kinase Neu. In terms of processing, isoform 1 is glycosylated. Expressed in giant cell tumor (osteoclastoma rich in multinucleated osteoclastic cells).

The protein localises to the cell membrane. The protein resides in the cytoplasm. It carries out the reaction O-phospho-L-tyrosyl-[protein] + H2O = L-tyrosyl-[protein] + phosphate. Its function is as follows. Isoform 1 plays a critical role in signaling transduction pathways and phosphoprotein network topology in red blood cells. May play a role in osteoclast formation and function. Functionally, isoform 2 acts as a negative regulator of insulin receptor (IR) signaling in skeletal muscle. Regulates insulin-induced tyrosine phosphorylation of insulin receptor (IR) and insulin receptor substrate 1 (IRS-1), phosphorylation of protein kinase B and glycogen synthase kinase-3 and insulin induced stimulation of glucose uptake. In terms of biological role, isoform 1 and isoform 2 act as a negative regulator of FceRI-mediated signal transduction leading to cytokine production and degranulation, most likely by acting at the level of SYK to affect downstream events such as phosphorylation of SLP76 and LAT and mobilization of Ca(2+). The protein is Receptor-type tyrosine-protein phosphatase epsilon (PTPRE) of Homo sapiens (Human).